We begin with the raw amino-acid sequence, 784 residues long: Toll-like receptor 2 (784 aa).

Positions 1–20 (MPRALWTAWVWAXIILSTEG) are cleaved as a signal peptide. The Extracellular segment spans residues 21-587 (ASDQASSLSC…ARLSLSECHR (567 aa)). A disulfide bridge connects residues cysteine 30 and cysteine 36. LRR repeat units follow at residues 54 to 77 (VKSL…RCVN), 78 to 101 (LKTL…HLRN), 102 to 125 (LEYL…SLYV), 126 to 150 (LKFL…HLPN), 151 to 175 (LXTL…GLTF), 176 to 199 (LEEL…SIQN), 200 to 223 (ISHL…IVSS), 224 to 250 (LDCL…MSTS), 251 to 278 (VKKL…YVSG), 279 to 308 (ILEV…HLGN), 309 to 337 (VETL…LTGK), 338 to 361 (VKRV…HLKS), 362 to 388 (LEYL…AWPF), 389 to 414 (LQTL…TLEN), 415 to 437 (LNSL…WPGK), 438 to 457 (MKQL…CLPQ), 458 to 478 (TLEI…ILPQ), 479 to 500 (LKEL…FLPV), and 501 to 524 (LSVM…SFQQ). Asparagine 114 is a glycosylation site (N-linked (GlcNAc...) asparagine). The N-linked (GlcNAc...) asparagine glycan is linked to asparagine 199. A disulfide bridge connects residues cysteine 353 and cysteine 382. Cysteine 432 and cysteine 454 are disulfide-bonded. N-linked (GlcNAc...) asparagine glycosylation is present at asparagine 442. The LRRCT domain maps to 525 to 579 (LKTLEAGGNNFICSCDFLSFTQGQQALGRVLVDWPDDYRCDSPSHVRGQRVQDAR). Residues 588-608 (AAVVSAACCALFLVLLLTGVL) form a helical membrane-spanning segment. The Cytoplasmic portion of the chain corresponds to 609–784 (CHRFHGLWYM…WLNLRAAIRS (176 aa)). The TIR domain occupies 639 to 782 (ICYDAFVSYS…GFWLNLRAAI (144 aa)). Lysine 754 participates in a covalent cross-link: Glycyl lysine isopeptide (Lys-Gly) (interchain with G-Cter in ubiquitin). Residues 761-778 (YLEWPVDETQQEGFWLNL) carry the ATG16L1-binding motif motif.

It belongs to the Toll-like receptor family. Interacts with LY96, TLR1 and TLR6 (via extracellular domain). TLR2 seems to exist in heterodimers with either TLR1 or TLR6 before stimulation by the ligand. The heterodimers form bigger oligomers in response to their corresponding ligands as well as further heterotypic associations with other receptors such as CD14 and/or CD36. Binds MYD88 (via TIR domain). Interacts with TICAM1. Interacts with CNPY3. Interacts with ATG16L1. Interacts with PPP1R11. Interacts with TICAM2. Interacts with TIRAP. In terms of processing, ubiquitinated at Lys-754 by PPP1R11, leading to its degradation. Deubiquitinated by USP2. Glycosylation of Asn-442 is critical for secretion of the N-terminal ectodomain of TLR2.

The protein localises to the membrane. Its subcellular location is the cytoplasmic vesicle. The protein resides in the phagosome membrane. It is found in the membrane raft. Cooperates with LY96 to mediate the innate immune response to bacterial lipoproteins and other microbial cell wall components. Cooperates with TLR1 or TLR6 to mediate the innate immune response to bacterial lipoproteins or lipopeptides. Acts via MYD88 and TRAF6, leading to NF-kappa-B activation, cytokine secretion and the inflammatory response. May also promote apoptosis in response to lipoproteins. Forms activation clusters composed of several receptors depending on the ligand, these clusters trigger signaling from the cell surface and subsequently are targeted to the Golgi in a lipid-raft dependent pathway. Forms the cluster TLR2:TLR6:CD14:CD36 in response to diacylated lipopeptides and TLR2:TLR1:CD14 in response to triacylated lipopeptides. This Bison bison (American bison) protein is Toll-like receptor 2 (TLR2).